Consider the following 207-residue polypeptide: Protein GET1 (207 aa).

Topologically, residues 1–4 (MPSL) are lumenal. Residues 5 to 24 (LISVLFLHIAIYIINTIAAS) form a helical membrane-spanning segment. Residues 25 to 110 (TIDSLLWLIY…FFDVAVKALR (86 aa)) lie on the Cytoplasmic side of the membrane. The stretch at 44 to 97 (IAREQHQMKLEVVQLKREMNATSSQDEFAKWAKLRRRHDKALEEYEVKNKQFSR) forms a coiled coil. The chain crosses the membrane as a helical span at residues 111–131 (WAGTSGLIVFLQFWFSKTPIF). The Lumenal portion of the chain corresponds to 132 to 155 (TLPPSWIPWQVEWVLSFPRAPMGT). A helical transmembrane segment spans residues 156-172 (VSIQVWGGACAVVVALI). The Cytoplasmic portion of the chain corresponds to 173 to 207 (GEAIGATVRYLYASKDSMEAIKVGAGAVEKEKKRQ).

This sequence belongs to the WRB/GET1 family. Interacts with GET3.

The protein localises to the endoplasmic reticulum membrane. In terms of biological role, required for the post-translational delivery of tail-anchored (TA) proteins to the endoplasmic reticulum. Acts as a membrane receptor for soluble GET3, which recognizes and selectively binds the transmembrane domain of TA proteins in the cytosol. In Paracoccidioides brasiliensis (strain Pb18), this protein is Protein GET1.